The sequence spans 506 residues: Cytochrome P450 6a8 (506 aa).

Cys-451 is a heme binding site.

It belongs to the cytochrome P450 family. Requires heme as cofactor.

It is found in the endoplasmic reticulum membrane. It localises to the microsome membrane. Involved in the metabolism of insect hormones and in the breakdown of synthetic insecticides. This is Cytochrome P450 6a8 (Cyp6a8) from Drosophila melanogaster (Fruit fly).